The following is a 474-amino-acid chain: Glutamate--tRNA ligase 1 (474 aa).

The 'HIGH' region signature appears at 11 to 21 (PSPTGFLHIGG). Residues 113 to 133 (TARAEGRAPRYDGRWRDRDPS) show a composition bias toward basic and acidic residues. The disordered stretch occupies residues 113–136 (TARAEGRAPRYDGRWRDRDPSEAP). Positions 240 to 244 (KLSKR) match the 'KMSKS' region motif. Residue Lys-243 coordinates ATP.

It belongs to the class-I aminoacyl-tRNA synthetase family. Glutamate--tRNA ligase type 1 subfamily. As to quaternary structure, monomer.

Its subcellular location is the cytoplasm. The enzyme catalyses tRNA(Glu) + L-glutamate + ATP = L-glutamyl-tRNA(Glu) + AMP + diphosphate. In terms of biological role, catalyzes the attachment of glutamate to tRNA(Glu) in a two-step reaction: glutamate is first activated by ATP to form Glu-AMP and then transferred to the acceptor end of tRNA(Glu). This Methylorubrum extorquens (strain PA1) (Methylobacterium extorquens) protein is Glutamate--tRNA ligase 1.